The sequence spans 81 residues: MSDLFSSPDHTLDALGLRCPEPVMMVRKTVRNMQTGETLLIIADDPATTRDIPGFCTFMEHDLLAQETEGLPYRYLLRKAH.

The active-site Cysteine persulfide intermediate is the Cys-19.

This sequence belongs to the sulfur carrier protein TusA family. Interacts with IscS.

The protein resides in the cytoplasm. It functions in the pathway tRNA modification. In terms of biological role, sulfur carrier protein involved in sulfur trafficking in the cell. Part of a sulfur-relay system required for 2-thiolation during synthesis of 2-thiouridine of the modified wobble base 5-methylaminomethyl-2-thiouridine (mnm(5)s(2)U) in tRNA. Interacts with IscS and stimulates its cysteine desulfurase activity. Accepts an activated sulfur from IscS, which is then transferred to TusD, and thus determines the direction of sulfur flow from IscS to 2-thiouridine formation. Also appears to be involved in sulfur transfer for the biosynthesis of molybdopterin. This Salmonella choleraesuis (strain SC-B67) protein is Sulfur carrier protein TusA.